Consider the following 206-residue polypeptide: Small ribosomal subunit protein uS4 (206 aa).

The region spanning 96-156 is the S4 RNA-binding domain; that stretch reads CRLDNVVYRM…EKSSNQLRIV (61 aa).

It belongs to the universal ribosomal protein uS4 family. Part of the 30S ribosomal subunit. Contacts protein S5. The interaction surface between S4 and S5 is involved in control of translational fidelity.

Its function is as follows. One of the primary rRNA binding proteins, it binds directly to 16S rRNA where it nucleates assembly of the body of the 30S subunit. Functionally, with S5 and S12 plays an important role in translational accuracy. This is Small ribosomal subunit protein uS4 from Pseudomonas putida (strain W619).